We begin with the raw amino-acid sequence, 394 residues long: Stabilizer of axonemal microtubules 2 (394 aa).

6 mn regions span residues Ser-110–Ile-122, Asp-144–Val-158, Asn-244–Ala-256, Lys-278–Arg-292, Leu-312–Leu-324, and Val-346–Ile-360.

Belongs to the FAM154 family.

The polypeptide is Stabilizer of axonemal microtubules 2 (Saxo2) (Mus musculus (Mouse)).